Reading from the N-terminus, the 508-residue chain is Probable cytosol aminopeptidase (508 aa).

Mn(2+)-binding residues include Lys274 and Asp279. Lys286 is an active-site residue. Residues Asp297, Asp356, and Glu358 each coordinate Mn(2+). The active site involves Arg360.

This sequence belongs to the peptidase M17 family. It depends on Mn(2+) as a cofactor.

It localises to the cytoplasm. The enzyme catalyses Release of an N-terminal amino acid, Xaa-|-Yaa-, in which Xaa is preferably Leu, but may be other amino acids including Pro although not Arg or Lys, and Yaa may be Pro. Amino acid amides and methyl esters are also readily hydrolyzed, but rates on arylamides are exceedingly low.. It catalyses the reaction Release of an N-terminal amino acid, preferentially leucine, but not glutamic or aspartic acids.. Functionally, presumably involved in the processing and regular turnover of intracellular proteins. Catalyzes the removal of unsubstituted N-terminal amino acids from various peptides. The polypeptide is Probable cytosol aminopeptidase (Cutibacterium acnes (strain DSM 16379 / KPA171202) (Propionibacterium acnes)).